Consider the following 383-residue polypeptide: MNSTSFSQVENHSIYYNFSEKNSRFLAFENDDCHLPLAMIFTLALAYGAVIILGVSGNLALIIIILKQKEMRNVTNILIVNLSFSDLLVAIMCLPFTFVYTLMDHWVFGEAMCKLNPFVQCVSITVSIFSLVLIAVERHQLIINPRGWRPNNRHAYVGIAVIWVLAVASSLPFLIYQVLTDEPFQNVTLDAFKDKYVCFDKFPSDSHRLSYTTLLLVLQYFGPLCFIFICYFKIYVRLKRRNSMMDKMRDNKYRSSEAKRINIMLLSIVVAFAVCWLPLTIFNTVFDWDHQIIATCNHNLLFLLCHLTAMISTCVNPIFYGFLNKNFQRDLQFFFSFCDFRSRDDDYETIAMSTMHTDVSKTSLKQASPVALKKIHTDDNEKI.

Topologically, residues 1–44 (MNSTSFSQVENHSIYYNFSEKNSRFLAFENDDCHLPLAMIFTLA) are extracellular. N-linked (GlcNAc...) asparagine glycans are attached at residues asparagine 2, asparagine 11, and asparagine 17. The chain crosses the membrane as a helical span at residues 45–65 (LAYGAVIILGVSGNLALIIII). Residues 66–76 (LKQKEMRNVTN) lie on the Cytoplasmic side of the membrane. The chain crosses the membrane as a helical span at residues 77-97 (ILIVNLSFSDLLVAIMCLPFT). At 98–116 (FVYTLMDHWVFGEAMCKLN) the chain is on the extracellular side. Residues cysteine 113 and cysteine 198 are joined by a disulfide bond. A helical membrane pass occupies residues 117–137 (PFVQCVSITVSIFSLVLIAVE). The Cytoplasmic portion of the chain corresponds to 138-154 (RHQLIINPRGWRPNNRH). A helical transmembrane segment spans residues 155–175 (AYVGIAVIWVLAVASSLPFLI). Residues 176-211 (YQVLTDEPFQNVTLDAFKDKYVCFDKFPSDSHRLSY) lie on the Extracellular side of the membrane. Asparagine 186 carries an N-linked (GlcNAc...) asparagine glycan. Residues 212-232 (TTLLLVLQYFGPLCFIFICYF) traverse the membrane as a helical segment. Residues 233–260 (KIYVRLKRRNSMMDKMRDNKYRSSEAKR) are Cytoplasmic-facing. Residues 261-281 (INIMLLSIVVAFAVCWLPLTI) traverse the membrane as a helical segment. Residues 282–299 (FNTVFDWDHQIIATCNHN) are Extracellular-facing. Residues 300–320 (LLFLLCHLTAMISTCVNPIFY) traverse the membrane as a helical segment. Over 321-383 (GFLNKNFQRD…KIHTDDNEKI (63 aa)) the chain is Cytoplasmic. A lipid anchor (S-palmitoyl cysteine) is attached at cysteine 338. Position 368 is a phosphoserine (serine 368).

Belongs to the G-protein coupled receptor 1 family.

The protein resides in the cell membrane. Functionally, receptor for neuropeptide Y and peptide YY. In Bos taurus (Bovine), this protein is Neuropeptide Y receptor type 1 (NPY1R).